The chain runs to 89 residues: Small ribosomal subunit protein bS20 (89 aa).

The disordered stretch occupies residues 1 to 20 (MANHKSAEKRARQTIKRTER).

The protein belongs to the bacterial ribosomal protein bS20 family.

Binds directly to 16S ribosomal RNA. The polypeptide is Small ribosomal subunit protein bS20 (Campylobacter concisus (strain 13826)).